Reading from the N-terminus, the 162-residue chain is Ribonuclease (162 aa).

A signal peptide spans 1-29 (MKKISSVFTMFALIAAILFSGFIPQQAYA). A propeptide spanning residues 30–53 (ETTLTPTATNKTASIQLTSDVHTL) is cleaved from the precursor. The active-site Proton acceptor is the Glu125. His154 functions as the Proton donor in the catalytic mechanism.

It belongs to the ribonuclease N1/T1 family.

It localises to the secreted. This is a purine-specific ribonuclease. The sequence is that of Ribonuclease from Bacillus pumilus (Bacillus mesentericus).